Here is a 114-residue protein sequence, read N- to C-terminus: T-cell leukemia/lymphoma protein 1A (114 aa).

It belongs to the TCL1 family. In terms of assembly, homodimer. Interacts with AKT1, AKT2 and AKT3 (via PH domain). Interacts with PNPT1; the interaction has no effect on PNPT1 exonuclease activity. In terms of tissue distribution, restricted in the T-cell lineage to immature thymocytes and activated peripheral lymphocytes. Preferentially expressed early in T- and B-lymphocyte differentiation.

It localises to the cytoplasm. The protein localises to the nucleus. It is found in the microsome. The protein resides in the endoplasmic reticulum. Enhances the phosphorylation and activation of AKT1, AKT2 and AKT3. Promotes nuclear translocation of AKT1. Enhances cell proliferation, stabilizes mitochondrial membrane potential and promotes cell survival. The protein is T-cell leukemia/lymphoma protein 1A (TCL1A) of Homo sapiens (Human).